A 248-amino-acid polypeptide reads, in one-letter code: Allergin-1 (248 aa).

The N-terminal stretch at 1-33 is a signal peptide; it reads MGDDDTPVCLSVASCKGVSCWLDKLLLWALTLS. Residues 34 to 150 lie on the Extracellular side of the membrane; sequence ITLRNTAVDC…DESCSSCLLS (117 aa). An Ig-like C2-type domain is found at 54–137; sequence PNLNSSMSVV…SKYSQNFNFT (84 aa). N-linked (GlcNAc...) asparagine glycosylation occurs at Asn68. A disulfide bridge connects residues Cys73 and Cys120. Asn135 carries N-linked (GlcNAc...) asparagine glycosylation. A helical transmembrane segment spans residues 151-171; sequence LLLPGVLLGLILPGLAFLIYL. Residues 172–248 lie on the Cytoplasmic side of the membrane; sequence KYKKGCTGKT…DDYIYSELTY (77 aa). 2 consecutive short sequence motifs (ITIM motif) follow at residues 216 to 221 and 241 to 246; these read IHYTTP and YIYSEL. Phosphotyrosine is present on residues Tyr218 and Tyr243.

Monomer. Interacts (tyrosine-phosphorylated) with PTPN6, PTPN11 and INPP5D. Post-translationally, N-glycosylated. In terms of tissue distribution, mast cell-specific. Expressed in primary and transformed mast cells.

Its subcellular location is the cell membrane. Functionally, immunoglobulin-like receptor which plays an inhibitory role in degranulation of mast cells. Negatively regulates IgE-mediated mast cell activation and suppresses the type I immediate hypersensitivity reaction. The protein is Allergin-1 (Milr1) of Rattus norvegicus (Rat).